The sequence spans 213 residues: Probable nicotinate-nucleotide adenylyltransferase (213 aa).

It belongs to the NadD family.

It catalyses the reaction nicotinate beta-D-ribonucleotide + ATP + H(+) = deamido-NAD(+) + diphosphate. The protein operates within cofactor biosynthesis; NAD(+) biosynthesis; deamido-NAD(+) from nicotinate D-ribonucleotide: step 1/1. Catalyzes the reversible adenylation of nicotinate mononucleotide (NaMN) to nicotinic acid adenine dinucleotide (NaAD). The chain is Probable nicotinate-nucleotide adenylyltransferase from Salmonella gallinarum (strain 287/91 / NCTC 13346).